Here is a 306-residue protein sequence, read N- to C-terminus: Pantothenate kinase (306 aa).

An ATP-binding site is contributed by 91–98; the sequence is GSVAVGKS.

It belongs to the prokaryotic pantothenate kinase family.

The protein localises to the cytoplasm. It carries out the reaction (R)-pantothenate + ATP = (R)-4'-phosphopantothenate + ADP + H(+). It participates in cofactor biosynthesis; coenzyme A biosynthesis; CoA from (R)-pantothenate: step 1/5. The polypeptide is Pantothenate kinase (Streptococcus equi subsp. zooepidemicus (strain MGCS10565)).